We begin with the raw amino-acid sequence, 290 residues long: Oxaloacetate decarboxylase (290 aa).

S53 contributes to the substrate binding site. D91 provides a ligand contact to Mg(2+). Residues R162 and H238 each coordinate substrate.

The protein belongs to the isocitrate lyase/PEP mutase superfamily. Oxaloacetate decarboxylase family. As to quaternary structure, homotetramer; dimer of dimers. The cofactor is Mg(2+).

The catalysed reaction is oxaloacetate + H(+) = pyruvate + CO2. In terms of biological role, catalyzes the decarboxylation of oxaloacetate into pyruvate. Seems to play a role in maintaining cellular concentrations of bicarbonate and pyruvate. The protein is Oxaloacetate decarboxylase of Ectopseudomonas mendocina (strain ymp) (Pseudomonas mendocina).